Here is a 925-residue protein sequence, read N- to C-terminus: Protein translocase subunit SecA (925 aa).

ATP-binding positions include Gln-87, 105–109, and Asp-515; that span reads GEGKT. Residues Cys-909, Cys-911, Cys-920, and His-921 each coordinate Zn(2+).

It belongs to the SecA family. As to quaternary structure, monomer and homodimer. Part of the essential Sec protein translocation apparatus which comprises SecA, SecYEG and auxiliary proteins SecDF-YajC and YidC. The cofactor is Zn(2+).

Its subcellular location is the cell inner membrane. The protein localises to the cytoplasm. It carries out the reaction ATP + H2O + cellular proteinSide 1 = ADP + phosphate + cellular proteinSide 2.. In terms of biological role, part of the Sec protein translocase complex. Interacts with the SecYEG preprotein conducting channel. Has a central role in coupling the hydrolysis of ATP to the transfer of proteins into and across the cell membrane, serving both as a receptor for the preprotein-SecB complex and as an ATP-driven molecular motor driving the stepwise translocation of polypeptide chains across the membrane. The polypeptide is Protein translocase subunit SecA (Cupriavidus necator (strain ATCC 17699 / DSM 428 / KCTC 22496 / NCIMB 10442 / H16 / Stanier 337) (Ralstonia eutropha)).